Reading from the N-terminus, the 2408-residue chain is Protein ELYS (2408 aa).

Positions 1 to 492 are seven-bladed beta propeller repeats; the sequence is MQNLEAQVTG…SGLIHFACTG (492 aa). Positions 1016-2408 are disordered; that stretch reads YSLPSLVWRE…AKPVTRRKMR (1393 aa). The segment covering 1124–1145 has biased composition (polar residues); the sequence is PLTSSDTDNNQTPHKSPLLKTS. Over residues 1457-1466 the composition is skewed to acidic residues; it reads NDQDSEEIEE. Composition is skewed to polar residues over residues 1705 to 1719 and 1735 to 1750; these read INEGQVSPNRDQSTL and PADSSTDIIGNITLPT. Over residues 2136 to 2149 the composition is skewed to basic and acidic residues; sequence QASKIQEDLSDTPR. 2 sufficient for chromatin-binding regions span residues 2281 to 2359 and 2359 to 2408; these read STQY…PVEI and IKLI…RKMR. Residues 2281–2408 form a sufficient to block nuclear pore assembly region; it reads STQYVFSPPS…AKPVTRRKMR (128 aa). Residues 2329-2341 constitute a DNA-binding region (a.T hook); it reads SKPRGRPPKHKAK. The segment covering 2331 to 2348 has biased composition (basic residues); it reads PRGRPPKHKAKAVTRVLK. A compositionally biased stretch (basic and acidic residues) spans 2378–2389; it reads DSTEAKGAEKIS.

The protein belongs to the ELYS family. Interacts with the Nup107-160 subcomplex of the NPC.

It localises to the nucleus. The protein localises to the nuclear pore complex. Its subcellular location is the cytoplasm. It is found in the nucleoplasm. Required for the assembly of a functional nuclear pore complex (NPC) on the surface of chromosomes as nuclei form at the end of mitosis. May initiate NPC assembly by binding to chromatin and recruiting the Nup107-160 subcomplex, which may in turn recruit membrane vesicles containing pom121 and tmem48/ndc1. Association with chromatin may require the presence of the mcm2-mcm7 complex, suggesting a mechanism for coordination of nuclear assembly and the inactivation of replication licensing. This chain is Protein ELYS (ahctf1), found in Xenopus laevis (African clawed frog).